The sequence spans 157 residues: Serine-protein kinase RsbW (157 aa).

This sequence belongs to the anti-sigma-factor family.

The enzyme catalyses L-seryl-[protein] + ATP = O-phospho-L-seryl-[protein] + ADP + H(+). It carries out the reaction L-threonyl-[protein] + ATP = O-phospho-L-threonyl-[protein] + ADP + H(+). Its function is as follows. Negative regulator of sigma-B activity. Phosphorylates and inactivates its specific antagonist protein, RsbV. Upon phosphorylation of RsbV, RsbW is released and binds to sigma-B, thereby blocking its ability to form an RNA polymerase holoenzyme (E-sigma-B). The protein is Serine-protein kinase RsbW of Listeria monocytogenes serotype 4b (strain CLIP80459).